The following is a 208-amino-acid chain: Thiamine-phosphate synthase (208 aa).

4-amino-2-methyl-5-(diphosphooxymethyl)pyrimidine contacts are provided by residues 36–40 and Asp68; that span reads QLRMK. Residues Asp69 and Asp88 each contribute to the Mg(2+) site. Thr107 contacts 4-amino-2-methyl-5-(diphosphooxymethyl)pyrimidine. 133–135 lines the 2-[(2R,5Z)-2-carboxy-4-methylthiazol-5(2H)-ylidene]ethyl phosphate pocket; sequence TTT. A 4-amino-2-methyl-5-(diphosphooxymethyl)pyrimidine-binding site is contributed by Lys136. Gly169 serves as a coordination point for 2-[(2R,5Z)-2-carboxy-4-methylthiazol-5(2H)-ylidene]ethyl phosphate.

It belongs to the thiamine-phosphate synthase family. The cofactor is Mg(2+).

The catalysed reaction is 2-[(2R,5Z)-2-carboxy-4-methylthiazol-5(2H)-ylidene]ethyl phosphate + 4-amino-2-methyl-5-(diphosphooxymethyl)pyrimidine + 2 H(+) = thiamine phosphate + CO2 + diphosphate. It carries out the reaction 2-(2-carboxy-4-methylthiazol-5-yl)ethyl phosphate + 4-amino-2-methyl-5-(diphosphooxymethyl)pyrimidine + 2 H(+) = thiamine phosphate + CO2 + diphosphate. It catalyses the reaction 4-methyl-5-(2-phosphooxyethyl)-thiazole + 4-amino-2-methyl-5-(diphosphooxymethyl)pyrimidine + H(+) = thiamine phosphate + diphosphate. Its pathway is cofactor biosynthesis; thiamine diphosphate biosynthesis; thiamine phosphate from 4-amino-2-methyl-5-diphosphomethylpyrimidine and 4-methyl-5-(2-phosphoethyl)-thiazole: step 1/1. Functionally, condenses 4-methyl-5-(beta-hydroxyethyl)thiazole monophosphate (THZ-P) and 2-methyl-4-amino-5-hydroxymethyl pyrimidine pyrophosphate (HMP-PP) to form thiamine monophosphate (TMP). The polypeptide is Thiamine-phosphate synthase (Phocaeicola vulgatus (strain ATCC 8482 / DSM 1447 / JCM 5826 / CCUG 4940 / NBRC 14291 / NCTC 11154) (Bacteroides vulgatus)).